Reading from the N-terminus, the 976-residue chain is Protein phosphatase 1 regulatory subunit 12B (976 aa).

Over residues 1–24 the composition is skewed to basic and acidic residues; that stretch reads MAELEHLGGKRAESARARRAEQLR. Positions 1-52 are disordered; sequence MAELEHLGGKRAESARARRAEQLRRWRGSLTEQEPAERQGAGRQLQTRRGSP. At Ser-29 the chain carries Phosphoserine. ANK repeat units follow at residues 57–86, 90–119, 123–152, 216–245, and 249–278; these read EDGAVFLAACSSGDTDEVKKLLARGADINT, DGLTALHQACIDENLDMVKFLVENRANVNQ, EGWTPLHAAASCGYLNIAEYFISHGASVGI, SGATALHVAAAKGYSEVLRLLIQAGYELNV, and DGWTPLHAAAHWGVKEACSILAEALCDMDI. Residues 342–489 form a disordered region; that stretch reads EEIPKSQDTE…LDDKDKEREN (148 aa). The segment covering 362–374 has biased composition (acidic residues); that stretch reads SEEEEGEDEVSES. Positions 375–385 are enriched in basic and acidic residues; it reads ETEKEADKKPE. Residues 411–423 show a composition bias toward low complexity; sequence FSASSARRLSSLF. Residue Thr-444 is modified to Phosphothreonine. A compositionally biased stretch (low complexity) spans 465 to 477; the sequence is SSIYRSSSSPRIS. Residues 480–489 show a composition bias toward basic and acidic residues; that stretch reads LDDKDKEREN. Ser-502 is modified (phosphoserine). Residues 503-873 are disordered; it reads STSDIEEKEN…LTSRVEEDSN (371 aa). Over residues 538 to 564 the composition is skewed to polar residues; the sequence is ETPQTIAPSTYTSTYLKRTPYKSQADS. Over residues 622-631 the composition is skewed to basic and acidic residues; the sequence is VRDEEAESLR. Positions 632–642 are enriched in basic residues; the sequence is KARSRQARQTR. A Phosphothreonine modification is found at Thr-645. Positions 655–679 are enriched in basic and acidic residues; sequence EAEKTFSRSRAERQAQEQPGEKLED. 2 stretches are compositionally biased toward polar residues: residues 722 to 739 and 747 to 763; these read DKPTTPVSPSASRPSLYT and SRASGPDSENSETSTHA. The span at 765–777 shows a compositional bias: basic and acidic residues; that stretch reads AAKEMDTSEKGEA. The segment covering 791–801 has biased composition (basic residues); sequence ERRRAKDRRRG. Phosphothreonine is present on Thr-802. Basic and acidic residues predominate over residues 818-830; the sequence is EEVKEALHERLSR. Ser-833 is subject to Phosphoserine. Positions 844–860 are enriched in basic and acidic residues; sequence YSDRASARARREAREAR. At Ser-941 the chain carries Phosphoserine.

In terms of assembly, PP1 comprises a catalytic subunit, PPP1CA, PPP1CB or PPP1CC, and one or several targeting or regulatory subunits. PPP1R12B mediates binding to myosin. Isoform 3 and isoform 4 bind PPP1R12A, but not isoform 1 of PPP1R12B itself. Binds IL16.

It localises to the cytoplasm. It is found in the cytoskeleton. The protein resides in the stress fiber. In terms of biological role, regulates myosin phosphatase activity. Augments Ca(2+) sensitivity of the contractile apparatus. This chain is Protein phosphatase 1 regulatory subunit 12B (Ppp1r12b), found in Mus musculus (Mouse).